A 530-amino-acid polypeptide reads, in one-letter code: uncharacterized protein (530 aa).

A disordered region spans residues 1 to 33 (MNNMSLKFPDIAINSSESSDDEDPSSKNEKKDG). Basic and acidic residues predominate over residues 24-33 (PSSKNEKKDG). The next 12 helical transmembrane spans lie at 83–103 (FFILPIMCITYGMQYLDKTAV), 124–144 (WLSTIFYLGYMIAQYPAGYLL), 147–167 (FPISYFMFIAAFLWSACVLLM), 181–201 (FFSGVFEGCVNPAFVALTAMW), 211–231 (VVSWYAFNGVAIMVGALLGYG), 244–264 (YPFLVIGAISTAWSFVYLFFP), 323–343 (VTNAMSVFSALIIQGIGYSGI), 346–366 (TLLTLPSGAFAVAGMIASGIF), 375–395 (IPLAMTTSSLTIVGSIMIWKI), 404–424 (VVGVWLFCTISSGNAVILSLL), 436–456 (TVNATMFLFYSIGNIVSPQLF), and 471–491 (SLVSVCLFEGVLALLAFYYIF).

Belongs to the major facilitator superfamily. Allantoate permease family.

Its subcellular location is the endoplasmic reticulum. The protein localises to the membrane. This is an uncharacterized protein from Schizosaccharomyces pombe (strain 972 / ATCC 24843) (Fission yeast).